A 540-amino-acid polypeptide reads, in one-letter code: Chaperonin GroEL (540 aa).

ATP is bound by residues threonine 30 to proline 33, lysine 51, aspartate 87 to threonine 91, glycine 415, and aspartate 495.

This sequence belongs to the chaperonin (HSP60) family. In terms of assembly, forms a cylinder of 14 subunits composed of two heptameric rings stacked back-to-back. Interacts with the co-chaperonin GroES.

The protein resides in the cytoplasm. The catalysed reaction is ATP + H2O + a folded polypeptide = ADP + phosphate + an unfolded polypeptide.. Its function is as follows. Together with its co-chaperonin GroES, plays an essential role in assisting protein folding. The GroEL-GroES system forms a nano-cage that allows encapsulation of the non-native substrate proteins and provides a physical environment optimized to promote and accelerate protein folding. This Serratia ficaria protein is Chaperonin GroEL.